The chain runs to 445 residues: Glucose-6-phosphate isomerase (445 aa).

Catalysis depends on Glu-287, which acts as the Proton donor. Active-site residues include His-308 and Lys-422.

Belongs to the GPI family.

It localises to the cytoplasm. The catalysed reaction is alpha-D-glucose 6-phosphate = beta-D-fructose 6-phosphate. It participates in carbohydrate biosynthesis; gluconeogenesis. It functions in the pathway carbohydrate degradation; glycolysis; D-glyceraldehyde 3-phosphate and glycerone phosphate from D-glucose: step 2/4. Catalyzes the reversible isomerization of glucose-6-phosphate to fructose-6-phosphate. The sequence is that of Glucose-6-phosphate isomerase from Bacteroides fragilis (strain ATCC 25285 / DSM 2151 / CCUG 4856 / JCM 11019 / LMG 10263 / NCTC 9343 / Onslow / VPI 2553 / EN-2).